The sequence spans 124 residues: MPTITQLIRKQRVKKSVKSKAPALAASPQKRGVCKRVYTTTPRKPNSAMRKVCTVVFTNGYECICYIGGEGHNVQEHGVLLVKGGGVKDLPGVKYHIVRGALDCSGVKDRKQARSKYGAARPKA.

Residue D89 is modified to 3-methylthioaspartic acid.

Belongs to the universal ribosomal protein uS12 family. Part of the 30S ribosomal subunit. Contacts proteins S8 and S17. May interact with IF1 in the 30S initiation complex.

Its function is as follows. With S4 and S5 plays an important role in translational accuracy. In terms of biological role, interacts with and stabilizes bases of the 16S rRNA that are involved in tRNA selection in the A site and with the mRNA backbone. Located at the interface of the 30S and 50S subunits, it traverses the body of the 30S subunit contacting proteins on the other side and probably holding the rRNA structure together. The combined cluster of proteins S8, S12 and S17 appears to hold together the shoulder and platform of the 30S subunit. The polypeptide is Small ribosomal subunit protein uS12 (Hamiltonella defensa subsp. Acyrthosiphon pisum (strain 5AT)).